The following is a 237-amino-acid chain: Demethylmenaquinone methyltransferase (237 aa).

S-adenosyl-L-methionine is bound by residues Thr58, Asp79, and 106 to 107 (NA).

The protein belongs to the class I-like SAM-binding methyltransferase superfamily. MenG/UbiE family.

The enzyme catalyses a 2-demethylmenaquinol + S-adenosyl-L-methionine = a menaquinol + S-adenosyl-L-homocysteine + H(+). Its pathway is quinol/quinone metabolism; menaquinone biosynthesis; menaquinol from 1,4-dihydroxy-2-naphthoate: step 2/2. Functionally, methyltransferase required for the conversion of demethylmenaquinol (DMKH2) to menaquinol (MKH2). In Bacillus anthracis (strain A0248), this protein is Demethylmenaquinone methyltransferase.